Here is a 469-residue protein sequence, read N- to C-terminus: Adenosylhomocysteinase (469 aa).

Substrate contacts are provided by Thr58, Asp133, and Glu195. Residue 196–198 (TTT) coordinates NAD(+). Positions 225 and 229 each coordinate substrate. Residues Asn230, 259 to 264 (GFGDVG), Glu282, Asn317, 338 to 340 (IGH), and Asn383 contribute to the NAD(+) site.

The protein belongs to the adenosylhomocysteinase family. NAD(+) serves as cofactor.

It localises to the cytoplasm. It catalyses the reaction S-adenosyl-L-homocysteine + H2O = L-homocysteine + adenosine. The protein operates within amino-acid biosynthesis; L-homocysteine biosynthesis; L-homocysteine from S-adenosyl-L-homocysteine: step 1/1. In terms of biological role, may play a key role in the regulation of the intracellular concentration of adenosylhomocysteine. The chain is Adenosylhomocysteinase from Rhodopseudomonas palustris (strain ATCC BAA-98 / CGA009).